The chain runs to 261 residues: 1-(5-phosphoribosyl)-5-[(5-phosphoribosylamino)methylideneamino] imidazole-4-carboxamide isomerase (261 aa).

Catalysis depends on Asp15, which acts as the Proton acceptor. Asp136 functions as the Proton donor in the catalytic mechanism.

It belongs to the HisA/HisF family.

It is found in the cytoplasm. It catalyses the reaction 1-(5-phospho-beta-D-ribosyl)-5-[(5-phospho-beta-D-ribosylamino)methylideneamino]imidazole-4-carboxamide = 5-[(5-phospho-1-deoxy-D-ribulos-1-ylimino)methylamino]-1-(5-phospho-beta-D-ribosyl)imidazole-4-carboxamide. Its pathway is amino-acid biosynthesis; L-histidine biosynthesis; L-histidine from 5-phospho-alpha-D-ribose 1-diphosphate: step 4/9. The sequence is that of 1-(5-phosphoribosyl)-5-[(5-phosphoribosylamino)methylideneamino] imidazole-4-carboxamide isomerase from Synechococcus sp. (strain JA-2-3B'a(2-13)) (Cyanobacteria bacterium Yellowstone B-Prime).